The chain runs to 72 residues: Exodeoxyribonuclease 7 small subunit (72 aa).

It belongs to the XseB family. Heterooligomer composed of large and small subunits.

The protein localises to the cytoplasm. It catalyses the reaction Exonucleolytic cleavage in either 5'- to 3'- or 3'- to 5'-direction to yield nucleoside 5'-phosphates.. Functionally, bidirectionally degrades single-stranded DNA into large acid-insoluble oligonucleotides, which are then degraded further into small acid-soluble oligonucleotides. This is Exodeoxyribonuclease 7 small subunit from Clostridium kluyveri (strain NBRC 12016).